Here is a 734-residue protein sequence, read N- to C-terminus: Fc receptor-like protein 3 (734 aa).

The signal sequence occupies residues 1-17 (MLLWLLLLILTPGREQS). Residues 18 to 573 (GVAPKAVLLL…GTSRNRTGLT (556 aa)) lie on the Extracellular side of the membrane. Ig-like C2-type domains are found at residues 21–98 (PKAV…VEFS), 99–182 (PDWL…KPLN), 192–270 (PVLR…HSIK), 284–369 (PVSN…PILS), 383–470 (PVLT…LRVT), and 476–563 (PVLT…LNVT). Disulfide bonds link C44–C82, C120–C163, C211–C260, C309–C358, C404–C451, and C497–C544. An N-linked (GlcNAc...) asparagine glycan is attached at N561. The helical transmembrane segment at 574–594 (AAGITGLVLSILVLAAAAALL) threads the bilayer. The Cytoplasmic segment spans residues 595–734 (HYARARRKPG…VPRVLLASDH (140 aa)). Positions 603 to 655 (PGGLSATGTSSHSPSECQEPSSSRPSRIDPQEPTHSKPLAPMELEPMYSNVNP) are disordered. Residues 608–627 (ATGTSSHSPSECQEPSSSRP) show a composition bias toward polar residues. A compositionally biased stretch (basic and acidic residues) spans 628-637 (SRIDPQEPTH). 4 consecutive short sequence motifs (ITIM motif) follow at residues 648-653 (PMYSNV), 660-665 (PIYSQI), 690-695 (VLYSEL), and 720-725 (ENYENV). 4 positions are modified to phosphotyrosine: Y650, Y662, Y692, and Y722. The tract at residues 695–734 (LKKTHPDDSAGEASSRGRAHEEDDEENYENVPRVLLASDH) is disordered.

In terms of assembly, interacts (via phosphorylated ITIM motifs) with phosphatases INPP5D, PTPN6 and PTPN11. Interacts (via ITIM motifs) SYK and ZAP70. Interacts with IZUMO1R/JUNO. Interacts (via extracellular domain) with IZUMO1; the interaction replaces IZUMO1R/JUNO as IZUMO1 receptor after adhesion between sperm and egg. In terms of processing, phosphorylated on cytoplasmic tyrosines; required for interaction with protein tyrosine phosphatases and protein tyrosine kinases. In terms of tissue distribution, primarily expressed in secondary lymphoid tissues by mature subsets of B-cells. Low expression on transitional B cells which increases to higher surface expression on mature and memory B-cells with innate-like features (at protein level). Expressed a low levels in naive and germinal center B-cells but also expressed in NK cells (at protein level). Expressed in unfertilized oocytes (at protein level). Expressed in a population of thymically derived naturally occurring regulatory T-cells that exhibits a memory phenotype, specialized in suppressing immune response to self-antigens. Detected in spleen, lymph node, peripheral blood lymphocytes, thymus, bone marrow, kidney, salivary gland, adrenal gland and uterus.

The protein localises to the cell membrane. It localises to the cell projection. Its subcellular location is the microvillus membrane. In terms of biological role, promotes TLR9-induced B-cell proliferation, activation and survival but inhibits antibody production and suppresses plasma cell differentiation. Enhances activation of NF-kappa-B and MAPK signaling pathways in TLR9 stimulated B-cells. Has inhibitory potentional on B-cell receptor (BCR)-mediated signaling, possibly through association with SH2 domain-containing phosphatases. Inhibits cell tyrosine phosphorylation, calcium mobilization and activation-induced cell death induced through BCR signaling. Regulatory T-cells expressing FCRL3 exhibit a memory phenotype, are relatively nonresponsive to antigenic stimulation in presence of IL2 and have reduced capacity to suppress the proliferation of effector T-cells. Acts as a human-specific epitope on the cell surface of oocytes (oolemma) and plays a role during sperm-egg adhesion and fusion. Interacts with the IZUMO1-IZUMO1R/JUNO sperm-egg complex and replaces IZUMO1R/JUNO as IZUMO1 receptor during fertilization, thereby permitting species-specific gamete fusion. The polypeptide is Fc receptor-like protein 3 (Homo sapiens (Human)).